Reading from the N-terminus, the 160-residue chain is Putative oxygenase ATEG_00330 (160 aa).

The EthD domain occupies 24-100 (HYFGTALHAK…RNIAADPEFA (77 aa)).

The protein belongs to the tpcK family.

Functionally, putative oxygenase; part of the gene cluster that mediates the biosynthesis of isoflavipucine. The PKS part of the PKS-NRPS ATEG_00325 probably assembles a triketide from an acetyl starter and two malonyl-CoA extender units. The poly-beta-keto intermediate would then be fused to the leucine unit by the NRPS part. The resulting amide would be liberated from the PKS-NRPS through reductive release of the linear PKS-NRPS product from the enzyme complex. Further steps in isoflapucine synthesis include a cyclization step, an oxidation step, a hydrolysis step involving a trans-amidation, and an additional oxidation step, leading to flavipucine. Formation of isoflavipucine from flavipucine requires an unusual rearrangement. Alternative rearrangement reactions could build up rubrobramide, representing a branching of flavipucine biosynthesis. The enzymes involved in the post-PKS-NRPS steps have not been identified yet, but the putative oxygenases ATEG_003329 and ATEG_00330 encoded by the cluster could play a role. The sequence is that of Putative oxygenase ATEG_00330 from Aspergillus terreus (strain NIH 2624 / FGSC A1156).